Reading from the N-terminus, the 431-residue chain is MENKSNSQILFAEAQQYIPGGVNSPVRAFKSVGQEFPRFIKFAKGAYLYDVDWNKYIDYIGSWGPMILGHCDDDVLEAIQCQVKNGLSYGAPCKQEVDLAKKIIELMPNIEQVRFVNSGTEATMSAIRLARAYTCRNKIIKFEGCYHGHADEFLVAAGSGALSLGQPNSPGVPEDVVKDTLVASFNDMESIQALFEKYKDEIACIIIEPIAGNMNMIFPQDDFLAKLRAICDQNSSLLIFDEVMTGFRVALGGAQSIYNVKPDLTTLGKVIGGGMPVGAFGGRKEIMQKVSPAGPVYQAGTLSGNPIAMTAGIKTLEKISQPGFFDELGAKAQKLVDGLNEAAKAYDFNFHAKCLGGMFGLFFCSDKIAVNTFVDLGKTNLKMFNQFFAYMLDNGVYLAPSAYEAGFISIAHSDEDIEKTIYLAKKFFQEN.

Residue lysine 269 is modified to N6-(pyridoxal phosphate)lysine.

It belongs to the class-III pyridoxal-phosphate-dependent aminotransferase family. HemL subfamily. As to quaternary structure, homodimer. Pyridoxal 5'-phosphate serves as cofactor.

It is found in the cytoplasm. It carries out the reaction (S)-4-amino-5-oxopentanoate = 5-aminolevulinate. It participates in porphyrin-containing compound metabolism; protoporphyrin-IX biosynthesis; 5-aminolevulinate from L-glutamyl-tRNA(Glu): step 2/2. In Francisella tularensis subsp. tularensis (strain SCHU S4 / Schu 4), this protein is Glutamate-1-semialdehyde 2,1-aminomutase.